The primary structure comprises 131 residues: Peptidyl-prolyl cis-trans isomerase NIMA-interacting 4 (131 aa).

The necessary for nuclear localization and DNA-binding stretch occupies residues 1-25 (MPPKGKSGSGKGGKGGAASGSDSAD). A disordered region spans residues 1–39 (MPPKGKSGSGKGGKGGAASGSDSADKKSQGPKGGGNAVK). The segment at 1-41 (MPPKGKSGSGKGGKGGAASGSDSADKKSQGPKGGGNAVKVR) is necessary for association with the pre-rRNP complexes. Positions 7-18 (SGSGKGGKGGAA) are enriched in gly residues. S19 carries the phosphoserine; by CK2 modification. The region spanning 35–129 (GNAVKVRHIL…FGYHIIMVEG (95 aa)) is the PpiC domain.

The protein belongs to the PpiC/parvulin rotamase family. PIN4 subfamily. Found in pre-ribosomal ribonucleoprotein (pre-rRNP) complexes. In terms of processing, phosphorylated. Phosphorylation occurs both in the nucleus and the cytoplasm. Phosphorylation at Ser-19 does not affect its PPIase activity but is required for nuclear localization, and the dephosphorylation is a prerequisite for the binding to DNA. The unphosphorylated form associates with the pre-rRNP complexes in the nucleus.

Its subcellular location is the nucleus. It is found in the nucleolus. It localises to the cytoplasm. The protein resides in the cytoskeleton. The protein localises to the spindle. It carries out the reaction [protein]-peptidylproline (omega=180) = [protein]-peptidylproline (omega=0). In terms of biological role, involved as a ribosomal RNA processing factor in ribosome biogenesis. Binds to tightly bent AT-rich stretches of double-stranded DNA. This is Peptidyl-prolyl cis-trans isomerase NIMA-interacting 4 (Pin4) from Mus musculus (Mouse).